Reading from the N-terminus, the 541-residue chain is Calcium-dependent protein kinase 9 (541 aa).

The interval Met1 to Lys75 is disordered. Gly2 carries N-myristoyl glycine lipidation. The span at Pro14–Ser54 shows a compositional bias: polar residues. Residue Ser69 is modified to Phosphoserine. Residues Tyr91 to Leu349 enclose the Protein kinase domain. Residues Leu97 to Thr105 and Lys120 contribute to the ATP site. The active-site Proton acceptor is Asp215. Residue Ser255 is modified to Phosphoserine. Residues Ala355 to Ile385 form an autoinhibitory domain region. 4 EF-hand domains span residues Glu392–Lys427, Leu428–Leu463, Glu464–Gly499, and Asp500–Gln534. Ca(2+)-binding residues include Asp405, Asp407, Ser409, Thr411, Glu416, Asp441, Asp443, Asn445, Ser447, Glu452, Asp477, Asp479, Ser481, Tyr483, Glu488, Asp512, Asp514, Asp516, Arg518, and Glu523.

The protein belongs to the protein kinase superfamily. Ser/Thr protein kinase family. CDPK subfamily.

The protein resides in the cell membrane. It carries out the reaction L-seryl-[protein] + ATP = O-phospho-L-seryl-[protein] + ADP + H(+). The enzyme catalyses L-threonyl-[protein] + ATP = O-phospho-L-threonyl-[protein] + ADP + H(+). Activated by calcium. Autophosphorylation may play an important role in the regulation of the kinase activity. In terms of biological role, may play a role in signal transduction pathways that involve calcium as a second messenger. The chain is Calcium-dependent protein kinase 9 (CPK9) from Arabidopsis thaliana (Mouse-ear cress).